Reading from the N-terminus, the 173-residue chain is Protein-export protein SecB 1 (173 aa).

The protein belongs to the SecB family. In terms of assembly, homotetramer, a dimer of dimers. One homotetramer interacts with 1 SecA dimer.

It localises to the cytoplasm. Its function is as follows. One of the proteins required for the normal export of preproteins out of the cell cytoplasm. It is a molecular chaperone that binds to a subset of precursor proteins, maintaining them in a translocation-competent state. It also specifically binds to its receptor SecA. In Gluconobacter oxydans (strain 621H) (Gluconobacter suboxydans), this protein is Protein-export protein SecB 1.